Here is a 247-residue protein sequence, read N- to C-terminus: Segregation and condensation protein A (247 aa).

This sequence belongs to the ScpA family. In terms of assembly, component of a cohesin-like complex composed of ScpA, ScpB and the Smc homodimer, in which ScpA and ScpB bind to the head domain of Smc. The presence of the three proteins is required for the association of the complex with DNA.

It is found in the cytoplasm. Functionally, participates in chromosomal partition during cell division. May act via the formation of a condensin-like complex containing Smc and ScpB that pull DNA away from mid-cell into both cell halves. The sequence is that of Segregation and condensation protein A from Bacillus cereus (strain AH187).